The chain runs to 237 residues: Phosphoribosylaminoimidazole-succinocarboxamide synthase (237 aa).

The protein belongs to the SAICAR synthetase family.

The catalysed reaction is 5-amino-1-(5-phospho-D-ribosyl)imidazole-4-carboxylate + L-aspartate + ATP = (2S)-2-[5-amino-1-(5-phospho-beta-D-ribosyl)imidazole-4-carboxamido]succinate + ADP + phosphate + 2 H(+). It participates in purine metabolism; IMP biosynthesis via de novo pathway; 5-amino-1-(5-phospho-D-ribosyl)imidazole-4-carboxamide from 5-amino-1-(5-phospho-D-ribosyl)imidazole-4-carboxylate: step 1/2. This is Phosphoribosylaminoimidazole-succinocarboxamide synthase from Listeria welshimeri serovar 6b (strain ATCC 35897 / DSM 20650 / CCUG 15529 / CIP 8149 / NCTC 11857 / SLCC 5334 / V8).